Here is a 334-residue protein sequence, read N- to C-terminus: Protein RecA (334 aa).

65–72 (GNESSGKT) contacts ATP.

The protein belongs to the RecA family.

The protein localises to the cytoplasm. Functionally, can catalyze the hydrolysis of ATP in the presence of single-stranded DNA, the ATP-dependent uptake of single-stranded DNA by duplex DNA, and the ATP-dependent hybridization of homologous single-stranded DNAs. It interacts with LexA causing its activation and leading to its autocatalytic cleavage. This is Protein RecA from Ureaplasma parvum serovar 3 (strain ATCC 27815 / 27 / NCTC 11736).